A 435-amino-acid polypeptide reads, in one-letter code: RuBisCO large subunit-binding protein subunit beta-1 (435 aa).

It belongs to the chaperonin (HSP60) family. Oligomer of probably six alpha and six beta subunits.

The protein resides in the plastid. The protein localises to the chloroplast. In terms of biological role, this protein binds RuBisCO small and large subunits and is implicated in the assembly of the enzyme oligomer. The protein is RuBisCO large subunit-binding protein subunit beta-1 of Chlamydomonas reinhardtii (Chlamydomonas smithii).